Consider the following 336-residue polypeptide: DNA-directed RNA polymerase subunit alpha (336 aa).

Residues 1 to 232 (MIQKNWQELI…DQLGVFVNFD (232 aa)) form an alpha N-terminal domain (alpha-NTD) region. The tract at residues 248-336 (FNPALLKKVD…DLAKRYEDQY (89 aa)) is alpha C-terminal domain (alpha-CTD).

The protein belongs to the RNA polymerase alpha chain family. In terms of assembly, homodimer. The RNAP catalytic core consists of 2 alpha, 1 beta, 1 beta' and 1 omega subunit. When a sigma factor is associated with the core the holoenzyme is formed, which can initiate transcription.

It catalyses the reaction RNA(n) + a ribonucleoside 5'-triphosphate = RNA(n+1) + diphosphate. In terms of biological role, DNA-dependent RNA polymerase catalyzes the transcription of DNA into RNA using the four ribonucleoside triphosphates as substrates. The chain is DNA-directed RNA polymerase subunit alpha from Rhizobium radiobacter (Agrobacterium tumefaciens).